The following is a 925-amino-acid chain: Protein translocase subunit SecA (925 aa).

Residues glutamine 87, 105–109 (GEGKT), and aspartate 531 each bind ATP. A disordered region spans residues 867–909 (AAGADMRFQHSQPESVLHKPEAGEGEEAQPFRRETPKVGRNDP). A compositionally biased stretch (basic and acidic residues) spans 895–906 (QPFRRETPKVGR). Zn(2+) contacts are provided by cysteine 910, cysteine 912, cysteine 921, and histidine 922.

Belongs to the SecA family. In terms of assembly, monomer and homodimer. Part of the essential Sec protein translocation apparatus which comprises SecA, SecYEG and auxiliary proteins SecDF-YajC and YidC. Zn(2+) is required as a cofactor.

It localises to the cell inner membrane. It is found in the cytoplasm. It carries out the reaction ATP + H2O + cellular proteinSide 1 = ADP + phosphate + cellular proteinSide 2.. In terms of biological role, part of the Sec protein translocase complex. Interacts with the SecYEG preprotein conducting channel. Has a central role in coupling the hydrolysis of ATP to the transfer of proteins into and across the cell membrane, serving both as a receptor for the preprotein-SecB complex and as an ATP-driven molecular motor driving the stepwise translocation of polypeptide chains across the membrane. This Thioalkalivibrio sulfidiphilus (strain HL-EbGR7) protein is Protein translocase subunit SecA.